The primary structure comprises 398 residues: Histidinol dehydrogenase (398 aa).

NAD(+) contacts are provided by Tyr-114, Gln-176, and Asn-199. Substrate-binding residues include Thr-222, Gln-244, and His-247. The Zn(2+) site is built by Gln-244 and His-247. Catalysis depends on proton acceptor residues Glu-298 and His-299. Residues His-299, Asp-331, Glu-384, and His-389 each coordinate substrate. Asp-331 serves as a coordination point for Zn(2+). Residue His-389 participates in Zn(2+) binding.

Belongs to the histidinol dehydrogenase family. The cofactor is Zn(2+).

It catalyses the reaction L-histidinol + 2 NAD(+) + H2O = L-histidine + 2 NADH + 3 H(+). Its pathway is amino-acid biosynthesis; L-histidine biosynthesis; L-histidine from 5-phospho-alpha-D-ribose 1-diphosphate: step 9/9. Functionally, catalyzes the sequential NAD-dependent oxidations of L-histidinol to L-histidinaldehyde and then to L-histidine. The chain is Histidinol dehydrogenase (hisD) from Saccharolobus solfataricus (strain ATCC 35092 / DSM 1617 / JCM 11322 / P2) (Sulfolobus solfataricus).